Reading from the N-terminus, the 61-residue chain is uncharacterized protein (61 aa).

Belongs to the DUP/COS family.

This is an uncharacterized protein from Saccharomyces cerevisiae (strain ATCC 204508 / S288c) (Baker's yeast).